Consider the following 1013-residue polypeptide: Putative DNA polymerase 060R (1013 aa).

The protein belongs to the DNA polymerase type-B family.

It carries out the reaction DNA(n) + a 2'-deoxyribonucleoside 5'-triphosphate = DNA(n+1) + diphosphate. Functionally, DNA-directed DNA polymerase involved in viral DNA replication. In Dryophytes versicolor (chameleon treefrog), this protein is Putative DNA polymerase 060R.